A 341-amino-acid polypeptide reads, in one-letter code: Ferrochelatase (341 aa).

H210 and E291 together coordinate Fe cation.

This sequence belongs to the ferrochelatase family.

It localises to the cytoplasm. It carries out the reaction heme b + 2 H(+) = protoporphyrin IX + Fe(2+). It functions in the pathway porphyrin-containing compound metabolism; protoheme biosynthesis; protoheme from protoporphyrin-IX: step 1/1. Functionally, catalyzes the ferrous insertion into protoporphyrin IX. The sequence is that of Ferrochelatase from Alcanivorax borkumensis (strain ATCC 700651 / DSM 11573 / NCIMB 13689 / SK2).